The following is a 455-amino-acid chain: Probable galactarate/D-glucarate transporter GudP (455 aa).

Helical transmembrane passes span 19 to 39 (WFIV…RATL), 59 to 79 (YVFS…GWLL), 87 to 107 (IIAL…AIGF), 108 to 128 (FSAG…GLSE), 153 to 173 (AFFN…MGWL), 177 to 197 (FGWH…AVIW), 253 to 273 (IGVY…LTWF), 289 to 309 (GFVA…GGIV), 320 to 340 (LTFA…SMIV), 348 to 368 (WLVV…ALGW), 386 to 406 (LFNT…GYIV), and 414 to 434 (GALV…LLLV).

Belongs to the major facilitator superfamily. Phthalate permease family.

The protein localises to the cell membrane. The catalysed reaction is galactarate(in) + H(+)(in) = galactarate(out) + H(+)(out). It carries out the reaction D-glucarate(in) + H(+)(in) = D-glucarate(out) + H(+)(out). Functionally, probably involved in the uptake of galactarate and/or D-glucarate. This is Probable galactarate/D-glucarate transporter GudP from Bacillus subtilis (strain 168).